A 272-amino-acid chain; its full sequence is Putative phosphatase HI_0597 (272 aa).

Asp11 functions as the Nucleophile in the catalytic mechanism. Residue Asp11 coordinates Mg(2+). Phosphate is bound at residue Leu12. Asp13 provides a ligand contact to Mg(2+). Residues 45-46 (TG) and Lys195 each bind phosphate. Asp218 provides a ligand contact to Mg(2+). Asn221 serves as a coordination point for phosphate.

It belongs to the HAD-like hydrolase superfamily. Cof family. Mg(2+) is required as a cofactor.

This Haemophilus influenzae (strain ATCC 51907 / DSM 11121 / KW20 / Rd) protein is Putative phosphatase HI_0597.